We begin with the raw amino-acid sequence, 343 residues long: MQAIIDAEQSFKFPVLVGDIGGTNARFSILVDSNAEPKEFPVLQTADYATIDEAIQHAILDQTAIQPRSVILAVAGPVDGDEIDLTNCDWVVRPKKMIADLGFEDVTVLNDFEAQALAVVSLEGHHMEQIGGKPEEAVATRVVLGPGTGLGVAGLVRTRHAWVPVPGEGGHIDIGPRTERDYQIFPHIERIEGRVTGEQILSGRGLRNLYLGICAADKITPTLETPVDITSAGLDGSNPQAAETLDLFATYLGRLAGDLALIFMAHGGVYLSGGIPVRILSALKAGSFRAAFEDKAPHKAIMRDIPVRVITYQLAALTGLSAFARTPSRFEVSTEGRRWRMRR.

18-23 (GDIGGT) contacts ATP.

Belongs to the bacterial glucokinase family.

It is found in the cytoplasm. The catalysed reaction is D-glucose + ATP = D-glucose 6-phosphate + ADP + H(+). This Brucella suis biovar 1 (strain 1330) protein is Glucokinase.